Reading from the N-terminus, the 749-residue chain is Signal transducer and activator of transcription 4 (749 aa).

Residues 570–665 (WIDGYIMGFV…ENPLKYLYPD (96 aa)) form the SH2 domain. Residue Lys668 is modified to N6-acetyllysine. At Tyr694 the chain carries Phosphotyrosine; by JAK. Ser722 is subject to Phosphoserine.

Belongs to the transcription factor STAT family. As to quaternary structure, forms a homodimer or a heterodimer with a related family member. Interacts with ARL2BP. Interacts with STAT1. Interacts with JUN; this complex efficiently interacts with the AP-1-related sequence of the IFN-gamma promoter. In terms of processing, acetylation at Lys-668 is required for JAK2-mediated phosphorylation and activation of STAT4. Tyrosine phosphorylated upon IL12 and IFN-alpha activation, but not by IFN-gamma in T-lymphocytes and NK cells. Serine phosphorylation is required for maximal transcriptional activity but not for DNA binding. Phosphorylation by MAP2K6 at Ser-722 is required for full transcriptional activity induced by IL12. However this serine phosphorylation is not required for cell proliferation although critical for IFN-gamma production. In terms of tissue distribution, expression is restricted to testis, thymus, and spleen.

It is found in the cytoplasm. It localises to the nucleus. Transcriptional regulator mainly expressed in hematopoietic cells that plays a critical role in cellular growth, differentiation and immune response. Plays a key role in the differentiation of T-helper 1 cells and the production of interferon-gamma. Also participates in multiple neutrophil functions including chemotaxis and production of the neutrophil extracellular traps. After IL12 binding to its receptor IL12RB2, STAT4 interacts with the intracellular domain of IL12RB2 and becomes tyrosine phosphorylated. Phosphorylated STAT4 then homodimerizes and migrates to the nucleus where it can recognize STAT target sequences present in IL12 responsive genes. Although IL12 appears to be the predominant activating signal, STAT4 can also be phosphorylated and activated in response to IFN-gamma stimulation via JAK1 and TYK2 and in response to different interleukins including IL23, IL2 and IL35. Transcription activation of IFN-gamma gene is mediated by interaction with JUN that forms a complex that efficiently interacts with the AP-1-related sequence of the IFN-gamma promoter. In response to IFN-alpha/beta signaling, acts as a transcriptional repressor and suppresses IL5 and IL13 mRNA expression during response to T-cell receptor (TCR) activation. This Mus musculus (Mouse) protein is Signal transducer and activator of transcription 4 (Stat4).